The sequence spans 292 residues: Short chain dehydrogenases/reductase notP' (292 aa).

Positions Met1–Ser25 are disordered. NADP(+)-binding residues include Leu48, Asp97, Lys158, Tyr193, Lys197, Ile230, and Thr232. Tyr193 serves as the catalytic Proton donor. The active-site Lowers pKa of active site Tyr is the Lys197.

Belongs to the short-chain dehydrogenases/reductases (SDR) family.

In terms of biological role, short chain dehydrogenases/reductase; part of the gene cluster that mediates the biosynthesis of notoamide, a fungal indole alkaloid that belongs to a family of natural products containing a characteristic bicyclo[2.2.2]diazaoctane core. The first step of notoamide biosynthesis involves coupling of L-proline and L-tryptophan by the bimodular NRPS notE', to produce cyclo-L-tryptophan-L-proline called brevianamide F. The reverse prenyltransferase notF' then acts as a deoxybrevianamide E synthase and converts brevianamide F to deoxybrevianamide E via reverse prenylation at C-2 of the indole ring leading to the bicyclo[2.2.2]diazaoctane core. Deoxybrevianamide E is further hydroxylated at C-6 of the indole ring, likely catalyzed by the cytochrome P450 monooxygenase notG', to yield 6-hydroxy-deoxybrevianamide E. 6-hydroxy-deoxybrevianamide E is a specific substrate of the prenyltransferase notC' for normal prenylation at C-7 to produce 6-hydroxy-7-prenyl-deoxybrevianamide, also called notoamide S. As the proposed pivotal branching point in notoamide biosynthesis, notoamide S can be diverted to notoamide E through an oxidative pyran ring closure putatively catalyzed by either notH' cytochrome P450 monooxygenase or the notD' FAD-linked oxidoreductase. This step would be followed by an indole 2,3-epoxidation-initiated pinacol-like rearrangement catalyzed by the notB' FAD-dependent monooxygenase leading to the formation of notoamide C and notoamide D. On the other hand notoamide S is converted to notoamide T by notH' (or notD'), a bifunctional oxidase that also functions as the intramolecular Diels-Alderase responsible for generation of (-)-notoamide T. To generate antipodal (+)-notoaminide T, notH (or notD) in Aspergillus strain MF297-2 is expected to catalyze a Diels-Alder reaction leading to the opposite stereochemistry. The remaining oxidoreductase notD' (or notH') likely catalyzes the oxidative pyran ring formation to yield (-)-stephacidin A. The FAD-dependent monooxygenase notI' is highly similar to notB' and is predicted to catalyze a similar conversion from (-)-stephacidin A to (+)-notoamide B via the 2,3-epoxidation of (-)-stephacidin A followed by a pinacol-type rearrangement. Finally, it remains unclear which enzyme could be responsible for the final hydroxylation steps leading to notoamide A and sclerotiamide. The function of notP' in the notoamide biosynthesis has not been determined yet. This Aspergillus versicolor protein is Short chain dehydrogenases/reductase notP'.